The following is a 266-amino-acid chain: MYFLLSPAKSLNETDTAPMDISSYYSQPELIEHSQALMKILKSKEPIDLQELMSISDDLSQLNAKRNQDWAWSDNELFTDDNAKPAGYLFDGDVYTGLDMYNMDKDTAIYVNEHLGILSGLYGVLKPLDFIQPYRLEMGTKLKNERGDNLYEFWGEEVTKIINKRMADSDDKVLINLASNEYFKAVKKKALNAEIITPRFEDEKNGQYKVISFYAKKARGLMVKYAADNKLTNAEQLKQFDLAGYYYCETASDDKTWTFRRDEVNQ.

Belongs to the UPF0246 family.

The chain is UPF0246 protein Pcryo_0542 from Psychrobacter cryohalolentis (strain ATCC BAA-1226 / DSM 17306 / VKM B-2378 / K5).